The chain runs to 417 residues: 26S proteasome regulatory subunit RPN14 (417 aa).

WD repeat units follow at residues 134-173 (AHVS…NPRT), 176-215 (GHRA…TIHT), 242-281 (ISTS…QTIQ), 285-325 (KFTC…CPVG), 330-371 (NEGT…PAIE), and 380-416 (SNDD…NLSN).

It belongs to the WD repeat PAAF1/RPN14 family. Associates with the 19S proteasome regulatory particle (RP). Interacts directly with RPT5 and RPT6.

It localises to the cytoplasm. It is found in the nucleus. Acts as a regulatory subunit of the 26 proteasome which is involved in the ATP-dependent degradation of ubiquitinated proteins. Is not a genuine component of the 26S proteasome, but an auxiliary factor that interacts with the proteasomal ATPase of 19S regulatory particle (RP). Acts as a chaperone which regulates the highly structured assembly of the 19S regulatory particle. Involved in the substrate specificity of the 26S proteasome and is especially involved in the degradation of ubiquitinated GCN4. May contribute to the stability of the 26S proteasome in some stress conditions. This Saccharomyces cerevisiae (strain ATCC 204508 / S288c) (Baker's yeast) protein is 26S proteasome regulatory subunit RPN14 (RPN14).